The sequence spans 335 residues: Phenylalanine--tRNA ligase alpha subunit (335 aa).

Glutamate 262 is a Mg(2+) binding site.

It belongs to the class-II aminoacyl-tRNA synthetase family. Phe-tRNA synthetase alpha subunit type 1 subfamily. In terms of assembly, tetramer of two alpha and two beta subunits. Requires Mg(2+) as cofactor.

The protein resides in the cytoplasm. It catalyses the reaction tRNA(Phe) + L-phenylalanine + ATP = L-phenylalanyl-tRNA(Phe) + AMP + diphosphate + H(+). The polypeptide is Phenylalanine--tRNA ligase alpha subunit (Prochlorococcus marinus (strain NATL2A)).